The primary structure comprises 138 residues: Large ribosomal subunit protein uL16 (138 aa).

Over residues 1–13 (MLQPARRKYRKEQ) the composition is skewed to basic residues. The disordered stretch occupies residues 1–20 (MLQPARRKYRKEQKGRNTGV).

This sequence belongs to the universal ribosomal protein uL16 family. Part of the 50S ribosomal subunit.

Binds 23S rRNA and is also seen to make contacts with the A and possibly P site tRNAs. The protein is Large ribosomal subunit protein uL16 of Verminephrobacter eiseniae (strain EF01-2).